Reading from the N-terminus, the 346-residue chain is Uroporphyrinogen decarboxylase (346 aa).

Substrate is bound by residues 26–30 (RQAGR), phenylalanine 45, aspartate 76, tyrosine 153, serine 208, and histidine 323.

The protein belongs to the uroporphyrinogen decarboxylase family. Homodimer.

It is found in the cytoplasm. It carries out the reaction uroporphyrinogen III + 4 H(+) = coproporphyrinogen III + 4 CO2. Its pathway is porphyrin-containing compound metabolism; protoporphyrin-IX biosynthesis; coproporphyrinogen-III from 5-aminolevulinate: step 4/4. In terms of biological role, catalyzes the decarboxylation of four acetate groups of uroporphyrinogen-III to yield coproporphyrinogen-III. This Prochlorococcus marinus subsp. pastoris (strain CCMP1986 / NIES-2087 / MED4) protein is Uroporphyrinogen decarboxylase.